A 194-amino-acid polypeptide reads, in one-letter code: MSMYNYVKEAWKVPANSYVKELQWARMQDWRKEPSVIRIERPTRIDRARNLGYKAKQGIVVVRVSVRRGGLRKPRPKHSKKPATMGINKITMAKSIQRIAEERAAKKYPNMEVLNSYWVGQDGKQKWYEVILVDPCQPSIKNDKSYNWLCKGTHKGRVTRGLTSAGKKGRGLMYKGKGAEKARPSVRANGKKTK.

Residues glycine 161–lysine 194 form a disordered region.

Belongs to the eukaryotic ribosomal protein eL15 family.

This Methanococcus maripaludis (strain C5 / ATCC BAA-1333) protein is Large ribosomal subunit protein eL15.